The chain runs to 205 residues: Penta-EF hand domain-containing protein 2 (205 aa).

3 consecutive EF-hand domains span residues 45–75 (EMQS…GGTP), 76–111 (LGIE…INNL), and 119–141 (DRNF…SGFQ). Ca(2+) contacts are provided by D54, N56, S58, T60, E65, D89, N91, N93, Q95, and E100.

It belongs to the Peflin/Sorcin family. As to quaternary structure, in contrast to pefA, does not form homodimers in presence of Ca(2+). May form heterodimers with pefA.

The protein localises to the cytoplasm. It localises to the membrane. The chain is Penta-EF hand domain-containing protein 2 (pefB) from Dictyostelium discoideum (Social amoeba).